Here is a 179-residue protein sequence, read N- to C-terminus: Large ribosomal subunit protein uL5 (179 aa).

This sequence belongs to the universal ribosomal protein uL5 family. Part of the 50S ribosomal subunit; part of the 5S rRNA/L5/L18/L25 subcomplex. Contacts the 5S rRNA and the P site tRNA. Forms a bridge to the 30S subunit in the 70S ribosome.

This is one of the proteins that bind and probably mediate the attachment of the 5S RNA into the large ribosomal subunit, where it forms part of the central protuberance. In the 70S ribosome it contacts protein S13 of the 30S subunit (bridge B1b), connecting the 2 subunits; this bridge is implicated in subunit movement. Contacts the P site tRNA; the 5S rRNA and some of its associated proteins might help stabilize positioning of ribosome-bound tRNAs. The protein is Large ribosomal subunit protein uL5 of Synechococcus sp. (strain CC9311).